The sequence spans 161 residues: MLFSFRAIVLFYCCMLTFAGIGFLWNPKFVVESGLVALIGASMEVKPLIVTQDNLSTLALSGLVFLILGMIYTISLLQSNFLFFSGITPIRAIFDFILTGFIYLKKEHIASNSLTFTFAFCDLMWQFWMFAAMSEERAKYLKNQKKAEELAARKAREVEES.

Topologically, residues M1 to R6 are cytoplasmic. Residues A7–P27 traverse the membrane as a helical segment. Over K28–S56 the chain is Lumenal. A helical transmembrane segment spans residues T57–L77. Over Q78–F81 the chain is Cytoplasmic. Residues L82–I102 form a helical membrane-spanning segment. The Lumenal segment spans residues Y103–N112. A helical transmembrane segment spans residues S113 to M133. Topologically, residues S134–S161 are cytoplasmic.

The protein belongs to the ILM1 family.

The protein resides in the endoplasmic reticulum. Its subcellular location is the membrane. This is Protein ilm1 from Schizosaccharomyces pombe (strain 972 / ATCC 24843) (Fission yeast).